The chain runs to 267 residues: Ribosyldihydronicotinamide dehydrogenase-like protein traD (267 aa).

FAD contacts are provided by residues His-9, 15–16 (LN), and 100–103 (LWWF). Residue 122–124 (GHG) coordinates substrate. FAD is bound by residues 152 to 155 (TLGG) and Tyr-160.

This sequence belongs to the NAD(P)H dehydrogenase (quinone) family. As to quaternary structure, homodimer. FAD is required as a cofactor.

It functions in the pathway secondary metabolite biosynthesis. Ribosyldihydronicotinamide dehydrogenase-like protein; part of the tra gene cluster that produces terrestric acid. The clavatol biosynthesis cluster cla and the terrestric acid cluster tra are both involved in the production of peniphenones and penilactones. The non-reducing PKS claF is responsible for the formation of clavatol from successive condensations of 3 malonyl-CoA units, presumably with a simple acetyl-CoA starter unit, and 2 methylation steps. The esterase claE probably collaborates with claF by catalyzing the hydrolysis of ACP-bound acyl intermediates to free the ACP from stalled intermediates. The clavatol oxidase claD then converts clavatol to hydroxyclavatol. Spontaneous dehydration of hydroxyclavatol leads to the accumulation of the highly active ortho-quinone methide. On the other hand, the PKS-NRPS hybrid traA is involved in the formation of crustosic acid, with the help of traB and traD. The polyketide synthase module (PKS) of traA is responsible for the synthesis of the polyketide backbone via the condensation of an acetyl-CoA starter unit with 3 malonyl-CoA units. The downstream nonribosomal peptide synthetase (NRPS) module then amidates the carboxyl end of the polyketide with L-malic acid. Because traA lacks a designated enoylreductase (ER) domain, the required activity is provided the enoyl reductase traG. Crustosic acid undergoes decarboxylation and isomerization to the terrestric acid, catalyzed by the 2-oxoglutarate-dependent dioxygenase traH. Both acids are further converted to the 2 gamma-butyrolactones (R)-5-methyltetronic acid and (S)-5-carboxylmethyltetronic acid, with involvement of the cytochrome P450 monooxygenase claJ. Spontaneous addition of the methide to these gamma-butyrolactones leads to peniphenone D and penilactone D, which undergo again stereospecific attacking by methide to give penilactones A and B. The sequence is that of Ribosyldihydronicotinamide dehydrogenase-like protein traD from Penicillium crustosum (Blue mold fungus).